We begin with the raw amino-acid sequence, 406 residues long: L-cysteine:1D-myo-inositol 2-amino-2-deoxy-alpha-D-glucopyranoside ligase (406 aa).

Cys45 provides a ligand contact to Zn(2+). L-cysteinyl-5'-AMP-binding positions include 45–48 (CGIT), Thr60, and 83–85 (NIT). The short motif at 47 to 57 (ITPYDATHMGH) is the 'HIGH' region element. A 'ERGGDP' region motif is present at residues 185–190 (ERGGDP). Residue Trp225 coordinates L-cysteinyl-5'-AMP. Cys229 is a binding site for Zn(2+). 247-249 (GSD) provides a ligand contact to L-cysteinyl-5'-AMP. His254 is a Zn(2+) binding site. Position 281 (Val281) interacts with L-cysteinyl-5'-AMP. Positions 287–291 (KMSKS) match the 'KMSKS' region motif.

It belongs to the class-I aminoacyl-tRNA synthetase family. MshC subfamily. Monomer. Zn(2+) is required as a cofactor.

It carries out the reaction 1D-myo-inositol 2-amino-2-deoxy-alpha-D-glucopyranoside + L-cysteine + ATP = 1D-myo-inositol 2-(L-cysteinylamino)-2-deoxy-alpha-D-glucopyranoside + AMP + diphosphate + H(+). Functionally, catalyzes the ATP-dependent condensation of GlcN-Ins and L-cysteine to form L-Cys-GlcN-Ins. This Kribbella flavida (strain DSM 17836 / JCM 10339 / NBRC 14399) protein is L-cysteine:1D-myo-inositol 2-amino-2-deoxy-alpha-D-glucopyranoside ligase.